The chain runs to 462 residues: Argininosuccinate lyase (462 aa).

This sequence belongs to the lyase 1 family. Argininosuccinate lyase subfamily.

The protein resides in the cytoplasm. The catalysed reaction is 2-(N(omega)-L-arginino)succinate = fumarate + L-arginine. It participates in amino-acid biosynthesis; L-arginine biosynthesis; L-arginine from L-ornithine and carbamoyl phosphate: step 3/3. In Ehrlichia ruminantium (strain Welgevonden), this protein is Argininosuccinate lyase.